Reading from the N-terminus, the 458-residue chain is uncharacterized protein (458 aa).

A TRAM domain is found at 8–66; sequence PVEKNEFIDVVFEDLTHDGAGVAKVKGYPIFVKNGLPGEEAQIKIIKVKKNFAFGRLMK. [4Fe-4S] cluster is bound by residues Cys-79, Cys-85, Cys-88, and Cys-166. S-adenosyl-L-methionine-binding residues include Gln-290, Tyr-319, Glu-340, and Asp-388. Cys-415 serves as the catalytic Nucleophile.

It belongs to the class I-like SAM-binding methyltransferase superfamily. RNA M5U methyltransferase family.

This is an uncharacterized protein from Bacillus cereus (strain ATCC 14579 / DSM 31 / CCUG 7414 / JCM 2152 / NBRC 15305 / NCIMB 9373 / NCTC 2599 / NRRL B-3711).